A 413-amino-acid chain; its full sequence is CinA-like protein (413 aa).

This sequence belongs to the CinA family.

This Geotalea daltonii (strain DSM 22248 / JCM 15807 / FRC-32) (Geobacter daltonii) protein is CinA-like protein.